The following is a 418-amino-acid chain: Gamma-glutamyl phosphate reductase (418 aa).

This sequence belongs to the gamma-glutamyl phosphate reductase family.

Its subcellular location is the cytoplasm. The catalysed reaction is L-glutamate 5-semialdehyde + phosphate + NADP(+) = L-glutamyl 5-phosphate + NADPH + H(+). Its pathway is amino-acid biosynthesis; L-proline biosynthesis; L-glutamate 5-semialdehyde from L-glutamate: step 2/2. Catalyzes the NADPH-dependent reduction of L-glutamate 5-phosphate into L-glutamate 5-semialdehyde and phosphate. The product spontaneously undergoes cyclization to form 1-pyrroline-5-carboxylate. In Moorella thermoacetica (strain ATCC 39073 / JCM 9320), this protein is Gamma-glutamyl phosphate reductase.